The following is a 186-amino-acid chain: Elongation factor P (186 aa).

Residue arginine 32 is glycosylated (N-alpha-linked (Rha) arginine).

Belongs to the elongation factor P family. Post-translationally, glycosylated ar Arg-32 by EarP: arginine rhamnosylation is required for EF-P function and rescue of polyproline stalled ribosomes.

Its subcellular location is the cytoplasm. The protein operates within protein biosynthesis; polypeptide chain elongation. Involved in peptide bond synthesis. Stimulates efficient translation and peptide-bond synthesis on native or reconstituted 70S ribosomes in vitro. Probably functions indirectly by altering the affinity of the ribosome for aminoacyl-tRNA, thus increasing their reactivity as acceptors for peptidyl transferase. This is Elongation factor P from Shewanella oneidensis (strain ATCC 700550 / JCM 31522 / CIP 106686 / LMG 19005 / NCIMB 14063 / MR-1).